The sequence spans 476 residues: MEFQTTLPSIRAVRTGEVRAEAALQECLGAIDAHNGEVNAYLSLDRDGAGARARHIDALSREERAKLPMGGVPFGIKDVLTVEGMPATASSKILEGYRPPYTATAVQRLIDAGAVLVGKLNCDEFAMGSSNENSAYGPVKNPRALDRVPGGSSGGSAAAVAANMAVATLGTDTGGSIRQPASFCGVVGVLPTYGRVSRYGLIAFASSLDRVGPFAHTVRDAAEVLGVIAGHDPMDATSSSVPVPDYTEKLDAGVKGLRLGVPAEYFAEGLDPEVKRAVEGTIEQLRAAGAEVKPISLPHTPYAIPTYYVIATAEASANLARFDGVRYGLRAPEANTLAAMYRQTRDLGFGAEVKRRILLGTYVLSAGYYDAYYKKAQQVRRLLAQDFLRAFEEVDAIVTPTAPTPAFKLGEKSDDPLSMYLADIYTVTANLAGICGASVPCGTSREGLPIGIQILGRHFDEATVLRVGQAVESLQK.

Catalysis depends on charge relay system residues Lys-77 and Ser-152. The active-site Acyl-ester intermediate is Ser-176.

It belongs to the amidase family. GatA subfamily. Heterotrimer of A, B and C subunits.

The catalysed reaction is L-glutamyl-tRNA(Gln) + L-glutamine + ATP + H2O = L-glutaminyl-tRNA(Gln) + L-glutamate + ADP + phosphate + H(+). Its function is as follows. Allows the formation of correctly charged Gln-tRNA(Gln) through the transamidation of misacylated Glu-tRNA(Gln) in organisms which lack glutaminyl-tRNA synthetase. The reaction takes place in the presence of glutamine and ATP through an activated gamma-phospho-Glu-tRNA(Gln). The sequence is that of Glutamyl-tRNA(Gln) amidotransferase subunit A from Acidobacterium capsulatum (strain ATCC 51196 / DSM 11244 / BCRC 80197 / JCM 7670 / NBRC 15755 / NCIMB 13165 / 161).